The following is a 199-amino-acid chain: V-set and transmembrane domain-containing protein 5 (199 aa).

An N-terminal signal peptide occupies residues 1–27; it reads MRPPRCVGRTQGIPLGLLAFWVATARC. The Extracellular segment spans residues 28–146; sequence LQSQGVSLYI…VSEIRYEDLH (119 aa). An Ig-like C2-type domain is found at 36-138; that stretch reads YIPRSAINAT…QSGTILLHVS (103 aa). N-linked (GlcNAc...) asparagine glycosylation is found at asparagine 43, asparagine 87, and asparagine 101. A helical transmembrane segment spans residues 147 to 167; sequence FVAVFFALLAAVAVVLISLMW. Residues 168–199 are Cytoplasmic-facing; it reads VCNQCAYKFQRKRRYKLRESTTEEIEMKDVEC. Residues 169-185 form an important for CDC42-dependent filopodia induction region; it reads CNQCAYKFQRKRRYKLR.

As to quaternary structure, can homooligomerize through cis interactions within the same cell membrane. Post-translationally, N-glycosylated.

The protein localises to the cell membrane. Its subcellular location is the cell projection. It is found in the dendrite. The protein resides in the axon. Cell adhesion-like membrane protein of the central nervous system (CNS) which modulates both the position and complexity of central neurons by altering their membrane morphology and dynamics. Involved in the formation of neuronal dendrites and protrusions including dendritic filopodia. In synaptogenesis, regulates synapse formation by altering dendritic spine morphology and actin distribution. Promotes formation of unstable neuronal spines such as thin and branched types. Regulates neuronal morphogenesis and migration during cortical development in the brain. This is V-set and transmembrane domain-containing protein 5 (Vstm5) from Rattus norvegicus (Rat).